We begin with the raw amino-acid sequence, 64 residues long: MPKMKSHRGACKRFKATASGKIKRERMNGSHNLEKKNRKRTRRLHQSTILDGTKEKQIKRMILG.

The protein belongs to the bacterial ribosomal protein bL35 family.

The polypeptide is Large ribosomal subunit protein bL35 (Chlorobium limicola (strain DSM 245 / NBRC 103803 / 6330)).